A 436-amino-acid chain; its full sequence is Homeobox protein PKNOX1 (436 aa).

The interval 24–49 is disordered; sequence LKTEQDPNCSEPDVEGVSPPPVGSQT. Ser-33 and Ser-41 each carry phosphoserine. In terms of domain architecture, MEIS N-terminal spans 80–163; the sequence is GSEGTTSASF…MNSETLLSGE (84 aa). The segment at residues 259-321 is a DNA-binding region (homeobox; TALE-type); the sequence is SKNKRGVLPK…NARRRILQPM (63 aa). The tract at residues 401–436 is disordered; it reads AEQSEDDSVDSTGDGGAALAPGHLGGLVLENSDSLQ.

The protein belongs to the TALE/MEIS homeobox family. In terms of assembly, interacts with MN1.

The protein resides in the nucleus. In terms of biological role, activates transcription in the presence of PBX1A and HOXA1. In Bos taurus (Bovine), this protein is Homeobox protein PKNOX1.